The primary structure comprises 65 residues: DNA-directed RNA polymerase subunit omega (65 aa).

The protein belongs to the RNA polymerase subunit omega family. In terms of assembly, the RNAP catalytic core consists of 2 alpha, 1 beta, 1 beta' and 1 omega subunit. When a sigma factor is associated with the core the holoenzyme is formed, which can initiate transcription.

The catalysed reaction is RNA(n) + a ribonucleoside 5'-triphosphate = RNA(n+1) + diphosphate. Its function is as follows. Promotes RNA polymerase assembly. Latches the N- and C-terminal regions of the beta' subunit thereby facilitating its interaction with the beta and alpha subunits. In Finegoldia magna (strain ATCC 29328 / DSM 20472 / WAL 2508) (Peptostreptococcus magnus), this protein is DNA-directed RNA polymerase subunit omega.